The primary structure comprises 726 residues: X-ray repair cross-complementing protein 5 (726 aa).

The VWFA domain maps to 8 to 160; sequence AVVLCMDVGL…ANLKKAEITL (153 aa). A leucine-zipper region spans residues 137 to 164; that stretch reads LSSPFSVDQLEVIIANLKKAEITLQFFL. The segment covering 175-186 has biased composition (low complexity); sequence GSSNNRGNAGSS. Positions 175 to 198 are disordered; sequence GSSNNRGNAGSSDRGCGPGKGLSD. One can recognise a Ku domain in the interval 253–449; that stretch reads GSSLSIRIVG…NKKFTPTESQ (197 aa). An EEXXXDL motif motif is present at residues 714–722; sequence EDEGDVDDL.

Belongs to the ku80 family. In terms of assembly, heterodimer composed of xrcc5/Ku80 and xrcc6/Ku70. In terms of processing, ubiquitinated via 'Lys-48'-linked polyubiquitination at DNA double strand break sites (DSBs), leading to its release from DSBs and subsequent proteasomal degradation. Polyubiquitination is not required for completion of NHEJ. Expressed at high levels in oocyte and testis.

It localises to the nucleus. Single-stranded DNA-dependent ATP-dependent helicase that plays a key role in DNA non-homologous end joining (NHEJ). The chain is X-ray repair cross-complementing protein 5 from Xenopus laevis (African clawed frog).